The primary structure comprises 643 residues: Protein disulfide-isomerase A4 (643 aa).

Residues 1 to 20 (MKLRKAWLLVLLLALTQLLA) form the signal peptide. Thioredoxin domains are found at residues 21–167 (AASA…EVSQ) and 167–299 (QPDW…EFLK). A disordered region spans residues 24–58 (AEDAHEDASDSENPIEDDDDEEEDEEDEDDLEVKE). Acidic residues predominate over residues 32-56 (SDSENPIEDDDDEEEDEEDEDDLEV). The CXXC motif lies at 89-92 (CGHC). Disulfide bonds link Cys-89–Cys-92 and Cys-204–Cys-207. The residue at position 364 (Lys-364) is an N6-acetyllysine. Residues 503-634 (FKKGKLKPVI…LSKFIDEHAT (132 aa)) form the Thioredoxin 3 domain. Positions 553-556 (CGHC) match the CXXC motif. A disulfide bridge connects residues Cys-553 and Cys-556. Residues 640-643 (KEEL) carry the Prevents secretion from ER motif.

The protein belongs to the protein disulfide isomerase family. Part of a large chaperone multiprotein complex comprising DNAJB11, HSP90B1, HSPA5, HYOU, PDIA2, PDIA4, PDIA6, PPIB, SDF2L1, UGGT1 and very small amounts of ERP29, but not, or at very low levels, CALR nor CANX. Component of a complex containing at least CRELD2, MANF, MATN3 and PDIA4. O-glycosylated.

It localises to the endoplasmic reticulum lumen. Its subcellular location is the melanosome. It catalyses the reaction Catalyzes the rearrangement of -S-S- bonds in proteins.. The protein is Protein disulfide-isomerase A4 (Pdia4) of Rattus norvegicus (Rat).